The sequence spans 468 residues: ATP-dependent protease ATPase subunit HslU (468 aa).

ATP contacts are provided by residues Val-22 and 64 to 69; that span reads GVGKTE. A disordered region spans residues 166-187; it reads FGNNDEEDEEPPTEDIKTKRSE. Residues 169–178 are compositionally biased toward acidic residues; that stretch reads NDEEDEEPPT. Positions 281, 346, and 418 each coordinate ATP.

The protein belongs to the ClpX chaperone family. HslU subfamily. In terms of assembly, a double ring-shaped homohexamer of HslV is capped on each side by a ring-shaped HslU homohexamer. The assembly of the HslU/HslV complex is dependent on binding of ATP.

The protein resides in the cytoplasm. Functionally, ATPase subunit of a proteasome-like degradation complex; this subunit has chaperone activity. The binding of ATP and its subsequent hydrolysis by HslU are essential for unfolding of protein substrates subsequently hydrolyzed by HslV. HslU recognizes the N-terminal part of its protein substrates and unfolds these before they are guided to HslV for hydrolysis. The sequence is that of ATP-dependent protease ATPase subunit HslU from Staphylococcus carnosus (strain TM300).